We begin with the raw amino-acid sequence, 340 residues long: MVNVLINGYGSIGKRVADAVAKQDDMKVIGVTKTKPDFEARMAVEKGYKLFAAIPERKHLFEEAGIPVEGTLDDIIEDADIVVDGAPKKIGKANLENVYKKHGVKAIIQGGEKAGDAQDSFNSLWSYDRCYGKDYIRLVSCNTTGLCRSMYAINSVADILKARIVLIRRAADPNDVKTGPVNAIVPNPVTVPSHHGPDVVSVIPELDGKIMTSAVIVPTTLMHMHSIMVETSGTNRDEIIDALAKTPRILTLKASEGFDSTATIIEYARDLGRSRYDLNEIAVWEESVNVVDNEVYMMQAIHQESDVIPENVDCIRAMLEMESDNLKSIEKTNKAMGLIK.

Residues serine 11–isoleucine 12 and glycine 111 each bind NAD(+). Serine 140–asparagine 142 contacts D-glyceraldehyde 3-phosphate. Cysteine 141 (nucleophile) is an active-site residue. Arginine 169 provides a ligand contact to NAD(+). Histidine 195–glycine 196 serves as a coordination point for D-glyceraldehyde 3-phosphate. Position 303 (glutamine 303) interacts with NAD(+).

Belongs to the glyceraldehyde-3-phosphate dehydrogenase family. As to quaternary structure, homotetramer.

The protein localises to the cytoplasm. It catalyses the reaction D-glyceraldehyde 3-phosphate + phosphate + NADP(+) = (2R)-3-phospho-glyceroyl phosphate + NADPH + H(+). The catalysed reaction is D-glyceraldehyde 3-phosphate + phosphate + NAD(+) = (2R)-3-phospho-glyceroyl phosphate + NADH + H(+). It participates in carbohydrate degradation; glycolysis; pyruvate from D-glyceraldehyde 3-phosphate: step 1/5. This chain is Glyceraldehyde-3-phosphate dehydrogenase, found in Methanococcus maripaludis (strain C7 / ATCC BAA-1331).